The primary structure comprises 457 residues: ATP synthase subunit beta (457 aa).

An ATP-binding site is contributed by 147 to 154 (GGAGVGKT).

It belongs to the ATPase alpha/beta chains family. F-type ATPases have 2 components, CF(1) - the catalytic core - and CF(0) - the membrane proton channel. CF(1) has five subunits: alpha(3), beta(3), gamma(1), delta(1), epsilon(1). CF(0) has three main subunits: a(1), b(2) and c(9-12). The alpha and beta chains form an alternating ring which encloses part of the gamma chain. CF(1) is attached to CF(0) by a central stalk formed by the gamma and epsilon chains, while a peripheral stalk is formed by the delta and b chains.

The protein localises to the cell inner membrane. It catalyses the reaction ATP + H2O + 4 H(+)(in) = ADP + phosphate + 5 H(+)(out). In terms of biological role, produces ATP from ADP in the presence of a proton gradient across the membrane. The catalytic sites are hosted primarily by the beta subunits. The chain is ATP synthase subunit beta from Glaesserella parasuis serovar 5 (strain SH0165) (Haemophilus parasuis).